A 430-amino-acid chain; its full sequence is Enolase (430 aa).

Residue glutamine 167 coordinates (2R)-2-phosphoglycerate. Glutamate 209 serves as the catalytic Proton donor. Aspartate 245, glutamate 286, and aspartate 313 together coordinate Mg(2+). Residues lysine 338, arginine 367, serine 368, and lysine 389 each coordinate (2R)-2-phosphoglycerate. Catalysis depends on lysine 338, which acts as the Proton acceptor.

It belongs to the enolase family. The cofactor is Mg(2+).

The protein resides in the cytoplasm. It is found in the secreted. Its subcellular location is the cell surface. The catalysed reaction is (2R)-2-phosphoglycerate = phosphoenolpyruvate + H2O. Its pathway is carbohydrate degradation; glycolysis; pyruvate from D-glyceraldehyde 3-phosphate: step 4/5. Its function is as follows. Catalyzes the reversible conversion of 2-phosphoglycerate (2-PG) into phosphoenolpyruvate (PEP). It is essential for the degradation of carbohydrates via glycolysis. The protein is Enolase of Synechococcus sp. (strain CC9605).